The chain runs to 655 residues: Fructose-1,6-bisphosphatase class 3 (655 aa).

The protein belongs to the FBPase class 3 family. Requires Mn(2+) as cofactor.

It catalyses the reaction beta-D-fructose 1,6-bisphosphate + H2O = beta-D-fructose 6-phosphate + phosphate. The protein operates within carbohydrate biosynthesis; gluconeogenesis. The chain is Fructose-1,6-bisphosphatase class 3 from Porphyromonas gingivalis (strain ATCC BAA-308 / W83).